Consider the following 349-residue polypeptide: Magnesium-protoporphyrin IX monomethyl ester [oxidative] cyclase (349 aa).

The segment covering 1–10 (MTATTATAPA) has biased composition (low complexity). The disordered stretch occupies residues 1–23 (MTATTATAPAMRGGGRNELPPHL).

It belongs to the AcsF family. Requires Fe cation as cofactor.

It catalyses the reaction Mg-protoporphyrin IX 13-monomethyl ester + 3 NADPH + 3 O2 + 2 H(+) = 3,8-divinyl protochlorophyllide a + 3 NADP(+) + 5 H2O. It participates in porphyrin-containing compound metabolism; chlorophyll biosynthesis (light-independent). Catalyzes the formation of the isocyclic ring in chlorophyll biosynthesis. Mediates the cyclase reaction, which results in the formation of divinylprotochlorophyllide (Pchlide) characteristic of all chlorophylls from magnesium-protoporphyrin IX 13-monomethyl ester (MgPMME). This chain is Magnesium-protoporphyrin IX monomethyl ester [oxidative] cyclase, found in Prochlorococcus marinus (strain MIT 9303).